Here is a 225-residue protein sequence, read N- to C-terminus: Helicostatins (225 aa).

Positions 1 to 18 are cleaved as a signal peptide; it reads MLYSSLPVCFLVLGAALC. The propeptide occupies 19–48; the sequence is APERMQNEAEPHDLQPHEAEPHSDHVAPLA. Leucine amide occurs at positions 58, 79, and 90. Residues 94–127 constitute a propeptide that is removed on maturation; the sequence is SVDEDQSNDEQQLTTSDLDQAALAELFDQYDDAE. Leu137 carries the post-translational modification Leucine amide. A propeptide spanning residues 141–149 is cleaved from the precursor; the sequence is FADDETSEE. Leu159, Leu170, Leu181, Leu192, and Leu206 each carry leucine amide. The disordered stretch occupies residues 205–225; sequence GLGKRSGDDVSADDSDNYFDV. A propeptide spanning residues 210–225 is cleaved from the precursor; that stretch reads SGDDVSADDSDNYFDV. The segment covering 214 to 225 has biased composition (acidic residues); sequence VSADDSDNYFDV.

This sequence belongs to the allatostatin family. Highly expressed in the CNS and gut of larvae. Also expressed in the cells of the larval brain and ventral nerve cord and in endocrine cells of the midgut.

The protein localises to the secreted. In terms of biological role, may act as a neurotransmitter or neuromodulator. The chain is Helicostatins from Helicoverpa armigera (Cotton bollworm).